The sequence spans 88 residues: Conotoxin VxVIB (88 aa).

The N-terminal stretch at 1 to 22 (MNLACVLIVAVLFLTASQLATA) is a signal peptide. A propeptide spanning residues 23 to 52 (ASYARDKQEYPAVRSSDEMQDSEDLTLTKE) is cleaved from the precursor. Intrachain disulfides connect C53/C68, C60/C72, and C67/C81.

As to expression, expressed by the venom duct.

It localises to the secreted. Functionally, may act as a neurotoxin, but produces no obvious effect on ionic currents when tested on the mouse dorsal rooted ganglia (DRG). The protein is Conotoxin VxVIB of Conus vexillum (Flag cone).